Reading from the N-terminus, the 81-residue chain is CLAVATA3/ESR (CLE)-related protein 25 (81 aa).

The signal sequence occupies residues 1–30 (MGGNGIRALVGVIASLGLIVFLLVGILANS). Positions 57–81 (KRKVPNGPDPIHNRKAETSRRPPRV) are disordered. Residues Pro-61 and Pro-64 each carry the hydroxyproline modification. Residue Pro-64 is glycosylated (O-linked (Ara...) hydroxyproline). Residues 67–81 (IHNRKAETSRRPPRV) show a composition bias toward basic and acidic residues.

This sequence belongs to the CLV3/ESR signal peptide family. Post-translationally, the O-glycosylation (arabinosylation) of the hydroxyproline Pro-64 enhances binding affinity of the CLE25p peptide for its receptor. In terms of tissue distribution, mostly expressed in flowers and siliques, and, to a lower extent, in roots, stems, apex, seedlings, leaves and pollen.

It is found in the secreted. The protein resides in the extracellular space. In terms of biological role, extracellular signal peptide that regulates cell fate. Represses root apical meristem maintenance. Regulates the transition of protophloem cells from proliferation to differentiation, thus impinging on postembryonic growth capacity of the root meristem; this signaling pathway requires CRN and CLV2. The polypeptide is CLAVATA3/ESR (CLE)-related protein 25 (Arabidopsis thaliana (Mouse-ear cress)).